The chain runs to 548 residues: Glutamate--tRNA ligase (548 aa).

The 'HIGH' region signature appears at 102-112 (PSPSGPLHIGH).

The protein belongs to the class-I aminoacyl-tRNA synthetase family. Glutamate--tRNA ligase type 2 subfamily.

Its subcellular location is the cytoplasm. The enzyme catalyses tRNA(Glu) + L-glutamate + ATP = L-glutamyl-tRNA(Glu) + AMP + diphosphate. In terms of biological role, catalyzes the attachment of glutamate to tRNA(Glu) in a two-step reaction: glutamate is first activated by ATP to form Glu-AMP and then transferred to the acceptor end of tRNA(Glu). The polypeptide is Glutamate--tRNA ligase (Thermoplasma volcanium (strain ATCC 51530 / DSM 4299 / JCM 9571 / NBRC 15438 / GSS1)).